A 195-amino-acid polypeptide reads, in one-letter code: Imidazoleglycerol-phosphate dehydratase (195 aa).

The protein belongs to the imidazoleglycerol-phosphate dehydratase family.

Its subcellular location is the cytoplasm. The catalysed reaction is D-erythro-1-(imidazol-4-yl)glycerol 3-phosphate = 3-(imidazol-4-yl)-2-oxopropyl phosphate + H2O. The protein operates within amino-acid biosynthesis; L-histidine biosynthesis; L-histidine from 5-phospho-alpha-D-ribose 1-diphosphate: step 6/9. The chain is Imidazoleglycerol-phosphate dehydratase from Azoarcus sp. (strain BH72).